The primary structure comprises 428 residues: Enolase (428 aa).

Position 162 (glutamine 162) interacts with (2R)-2-phosphoglycerate. The active-site Proton donor is glutamate 204. The Mg(2+) site is built by aspartate 241, glutamate 283, and aspartate 310. Lysine 335, arginine 364, serine 365, and lysine 386 together coordinate (2R)-2-phosphoglycerate. The Proton acceptor role is filled by lysine 335.

This sequence belongs to the enolase family. The cofactor is Mg(2+).

The protein localises to the cytoplasm. It localises to the secreted. Its subcellular location is the cell surface. The catalysed reaction is (2R)-2-phosphoglycerate = phosphoenolpyruvate + H2O. Its pathway is carbohydrate degradation; glycolysis; pyruvate from D-glyceraldehyde 3-phosphate: step 4/5. In terms of biological role, catalyzes the reversible conversion of 2-phosphoglycerate (2-PG) into phosphoenolpyruvate (PEP). It is essential for the degradation of carbohydrates via glycolysis. This is Enolase from Rhodococcus opacus (strain B4).